The sequence spans 158 residues: Transcription elongation factor GreA (158 aa).

Positions 45–72 form a coiled coil; the sequence is AEYHAAREQQSFIEGRIKQLEGELSHAE.

This sequence belongs to the GreA/GreB family.

Necessary for efficient RNA polymerase transcription elongation past template-encoded arresting sites. The arresting sites in DNA have the property of trapping a certain fraction of elongating RNA polymerases that pass through, resulting in locked ternary complexes. Cleavage of the nascent transcript by cleavage factors such as GreA or GreB allows the resumption of elongation from the new 3'terminus. GreA releases sequences of 2 to 3 nucleotides. The sequence is that of Transcription elongation factor GreA from Xanthomonas campestris pv. campestris (strain ATCC 33913 / DSM 3586 / NCPPB 528 / LMG 568 / P 25).